A 79-amino-acid polypeptide reads, in one-letter code: Putative Fis-like DNA-binding protein (79 aa).

Positions 55-74 (QSKASVMLGLNRNTLRKKLI) form a DNA-binding region, H-T-H motif.

The protein belongs to the transcriptional regulatory Fis family.

The polypeptide is Putative Fis-like DNA-binding protein (Neisseria meningitidis serogroup A / serotype 4A (strain DSM 15465 / Z2491)).